Consider the following 323-residue polypeptide: Putative dTDP-D-glucose 4,6-dehydratase (323 aa).

Substrate is bound at residue T124. The active-site Proton donor is D125. Residues E126 and Y149 each act as proton acceptor in the active site.

This sequence belongs to the NAD(P)-dependent epimerase/dehydratase family. dTDP-glucose dehydratase subfamily. NAD(+) serves as cofactor.

The catalysed reaction is dTDP-alpha-D-glucose = dTDP-4-dehydro-6-deoxy-alpha-D-glucose + H2O. The protein is Putative dTDP-D-glucose 4,6-dehydratase of Acanthamoeba polyphaga mimivirus (APMV).